A 322-amino-acid polypeptide reads, in one-letter code: Arginase-1 (322 aa).

The disordered stretch occupies residues 1-27; it reads MSSKPQSIGVIGAPFSKGQPRGGVEEG. Position 7 is a phosphoserine (serine 7). Lysine 17 carries the post-translational modification N6-succinyllysine. Serine 62 carries the phosphoserine modification. Residue lysine 75 is modified to N6-succinyllysine. Histidine 101, aspartate 124, histidine 126, and aspartate 128 together coordinate Mn(2+). Substrate-binding positions include 126-130, 137-139, and aspartate 183; these read HTDIN and TGN. The residue at position 217 (serine 217) is a Phosphoserine. Mn(2+) contacts are provided by aspartate 232 and aspartate 234. The substrate site is built by threonine 246 and glutamate 277.

It belongs to the arginase family. In terms of assembly, homotrimer. Interacts with CMTM6. Mn(2+) is required as a cofactor.

The protein localises to the cytoplasm. It catalyses the reaction L-arginine + H2O = urea + L-ornithine. Its pathway is nitrogen metabolism; urea cycle; L-ornithine and urea from L-arginine: step 1/1. This chain is Arginase-1 (ARG1), found in Bos taurus (Bovine).